The chain runs to 356 residues: Probable dual-specificity RNA methyltransferase RlmN (356 aa).

Catalysis depends on Glu100, which acts as the Proton acceptor. The Radical SAM core domain occupies Thr106 to Asp340. A disulfide bridge links Cys113 with Cys345. Residues Cys120, Cys124, and Cys127 each coordinate [4Fe-4S] cluster. S-adenosyl-L-methionine contacts are provided by residues Gly167–Glu168, Ser197, Ser226–His228, and Asn302. The S-methylcysteine intermediate role is filled by Cys345.

It belongs to the radical SAM superfamily. RlmN family. Requires [4Fe-4S] cluster as cofactor.

The protein localises to the cytoplasm. It carries out the reaction adenosine(2503) in 23S rRNA + 2 reduced [2Fe-2S]-[ferredoxin] + 2 S-adenosyl-L-methionine = 2-methyladenosine(2503) in 23S rRNA + 5'-deoxyadenosine + L-methionine + 2 oxidized [2Fe-2S]-[ferredoxin] + S-adenosyl-L-homocysteine. The enzyme catalyses adenosine(37) in tRNA + 2 reduced [2Fe-2S]-[ferredoxin] + 2 S-adenosyl-L-methionine = 2-methyladenosine(37) in tRNA + 5'-deoxyadenosine + L-methionine + 2 oxidized [2Fe-2S]-[ferredoxin] + S-adenosyl-L-homocysteine. Functionally, specifically methylates position 2 of adenine 2503 in 23S rRNA and position 2 of adenine 37 in tRNAs. In Prochlorococcus marinus (strain MIT 9303), this protein is Probable dual-specificity RNA methyltransferase RlmN.